We begin with the raw amino-acid sequence, 647 residues long: UvrABC system protein C (647 aa).

The GIY-YIG domain occupies Ser26–Ile106. Positions Asp216–Leu251 constitute a UVR domain.

This sequence belongs to the UvrC family. Interacts with UvrB in an incision complex.

The protein localises to the cytoplasm. Functionally, the UvrABC repair system catalyzes the recognition and processing of DNA lesions. UvrC both incises the 5' and 3' sides of the lesion. The N-terminal half is responsible for the 3' incision and the C-terminal half is responsible for the 5' incision. The protein is UvrABC system protein C of Prochlorococcus marinus (strain MIT 9211).